Here is a 423-residue protein sequence, read N- to C-terminus: D-tagatose-1,6-bisphosphate aldolase subunit GatZ (423 aa).

Belongs to the GatZ/KbaZ family. GatZ subfamily. As to quaternary structure, forms a complex with GatY.

Its pathway is carbohydrate metabolism; D-tagatose 6-phosphate degradation; D-glyceraldehyde 3-phosphate and glycerone phosphate from D-tagatose 6-phosphate: step 2/2. Component of the tagatose-1,6-bisphosphate aldolase GatYZ that is required for full activity and stability of the Y subunit. Could have a chaperone-like function for the proper and stable folding of GatY. When expressed alone, GatZ does not show any aldolase activity. Is involved in the catabolism of galactitol. The chain is D-tagatose-1,6-bisphosphate aldolase subunit GatZ from Salmonella paratyphi B (strain ATCC BAA-1250 / SPB7).